Reading from the N-terminus, the 300-residue chain is Free fatty acid receptor 1 (300 aa).

At 1 to 8 the chain is on the extracellular side; sequence MALSPQLF. The helical transmembrane segment at 9 to 31 threads the bilayer; it reads FALYVSAFALGFPLNLLAIRGAV. The Cytoplasmic portion of the chain corresponds to 32–41; the sequence is ARARLRLTPN. The chain crosses the membrane as a helical span at residues 42 to 64; sequence LVYTLHLACSDLLLAITLPVKAV. Topologically, residues 65–79 are extracellular; the sequence is EALASGAWPLPLPLC. A disulfide bond links C79 and C170. A helical transmembrane segment spans residues 80–101; it reads PVFVLVHFAPLYAGGGFLAALS. Over 102-121 the chain is Cytoplasmic; it reads AGRYLGAAFPFGYQAVRRPR. A helical transmembrane segment spans residues 122–142; sequence YSWGVCVAIWALVLCHMGLVL. Topologically, residues 143–178 are extracellular; it reads GLEAPGGWLNTTSSSLGINTPVNGSPVCLEAWDPNS. N152 carries an N-linked (GlcNAc...) asparagine glycan. The chain crosses the membrane as a helical span at residues 179–200; sequence ARPARLSFSILLFFVPLVITAF. The Cytoplasmic portion of the chain corresponds to 201-223; the sequence is CYVGCLRALAHSGLSHKRKLRAA. A helical transmembrane segment spans residues 224–248; it reads WAAGGAFLTLLLCLGPYNASNVASF. The Extracellular segment spans residues 249–256; it reads VNPDLGGS. The helical transmembrane segment at 257-279 threads the bilayer; it reads WRKLGLITGSWSVVLNPLVTGYL. The Cytoplasmic segment spans residues 280 to 300; that stretch reads GASPGRGTVCTTRTQGGTIQK.

The protein belongs to the G-protein coupled receptor 1 family.

It localises to the cell membrane. In terms of biological role, G-protein coupled receptor for medium and long chain saturated and unsaturated fatty acids that plays an important role in glucose homeostasis. Fatty acid binding increases glucose-stimulated insulin secretion, and may also enhance the secretion of glucagon-like peptide 1 (GLP-1). May also play a role in bone homeostasis; receptor signaling activates pathways that inhibit osteoclast differentiation. Ligand binding leads to a conformation change that triggers signaling via G-proteins that activate phospholipase C, leading to an increase of the intracellular calcium concentration. Seems to act through a G(q) and G(i)-mediated pathway. Mediates the anti-inflammatory effects of omega-3 polyunsaturated fatty acids (PUFAs) via inhibition of NLRP3 inflammasome activation. This Mesocricetus auratus (Golden hamster) protein is Free fatty acid receptor 1 (FFAR1).